The chain runs to 212 residues: Large ribosomal subunit protein uL3 (212 aa).

The span at 139-153 shows a compositional bias: polar residues; that stretch reads LSHRVTGSIGQNQTP. A disordered region spans residues 139 to 161; it reads LSHRVTGSIGQNQTPGKVFKGKK. Gln-151 bears the N5-methylglutamine mark.

It belongs to the universal ribosomal protein uL3 family. Part of the 50S ribosomal subunit. Forms a cluster with proteins L14 and L19. Methylated by PrmB.

Its function is as follows. One of the primary rRNA binding proteins, it binds directly near the 3'-end of the 23S rRNA, where it nucleates assembly of the 50S subunit. The chain is Large ribosomal subunit protein uL3 from Baumannia cicadellinicola subsp. Homalodisca coagulata.